The chain runs to 515 residues: Putative pumilio homolog 8, chloroplastic (515 aa).

Residues 1–33 (MMRGEFGEASSLSRSPSSPLQTEPHPQSPKFYR) are disordered. The N-terminal 70 residues, 1–70 (MMRGEFGEAS…LSSYFSNGLC (70 aa)), are a transit peptide targeting the chloroplast. Residues 10–20 (SSLSRSPSSPL) show a composition bias toward low complexity. Residues 174–515 (SGVGALFDHQ…RIFSRNLLKN (342 aa)) enclose the PUM-HD domain. Pumilio repeat units lie at residues 198–233 (EFQG…VIFS), 234–269 (EVIP…QIIL), 270–308 (MVTS…SLVK), 310–345 (ALRP…FIFE), 346–381 (DATK…KLVT), 382–417 (EISR…AMLA), 418–456 (QLKG…ELIS), and 457–490 (VPHF…TLVE).

It localises to the plastid. It is found in the chloroplast. The protein localises to the cytoplasm. In terms of biological role, sequence-specific RNA-binding protein that regulates translation and mRNA stability by binding the 3'-UTR of target mRNAs. The chain is Putative pumilio homolog 8, chloroplastic (APUM8) from Arabidopsis thaliana (Mouse-ear cress).